Reading from the N-terminus, the 283-residue chain is Pantothenate synthetase (283 aa).

30 to 37 provides a ligand contact to ATP; that stretch reads MGNLHDAH. The Proton donor role is filled by H37. Position 61 (Q61) interacts with (R)-pantoate. Beta-alanine is bound at residue Q61. 149–152 is a binding site for ATP; the sequence is GVKD. Q155 contacts (R)-pantoate. ATP contacts are provided by residues V178 and 186-189; that span reads MSSR.

It belongs to the pantothenate synthetase family. As to quaternary structure, homodimer.

The protein localises to the cytoplasm. It catalyses the reaction (R)-pantoate + beta-alanine + ATP = (R)-pantothenate + AMP + diphosphate + H(+). The protein operates within cofactor biosynthesis; (R)-pantothenate biosynthesis; (R)-pantothenate from (R)-pantoate and beta-alanine: step 1/1. Functionally, catalyzes the condensation of pantoate with beta-alanine in an ATP-dependent reaction via a pantoyl-adenylate intermediate. This is Pantothenate synthetase from Cellvibrio japonicus (strain Ueda107) (Pseudomonas fluorescens subsp. cellulosa).